The primary structure comprises 485 residues: Zinc finger protein 165 (485 aa).

A Glycyl lysine isopeptide (Lys-Gly) (interchain with G-Cter in SUMO2) cross-link involves residue Lys-23. One can recognise an SCAN box domain in the interval 62–127 (GPREALSRLR…EEAVTILEDL (66 aa)). Glycyl lysine isopeptide (Lys-Gly) (interchain with G-Cter in SUMO2) cross-links involve residues Lys-162 and Lys-195. Residues 290–314 (KSCKHGTCDQSFKWNSDFINHQIIY) form a C2H2-type 1; degenerate zinc finger. 5 consecutive C2H2-type zinc fingers follow at residues 344–366 (HQCNECGKAFRHSSKLARHQRIH), 372–394 (YECNECGKSFAESSDLTRHRRIH), 400–422 (FGCKECGRAFNLNSHLIRHQRIH), 428–450 (YECSECGKTFRVSSHLIRHFRIH), and 456–478 (YECSECGRAFSQSSNLSQHQRIH).

It belongs to the krueppel C2H2-type zinc-finger protein family. As to expression, expressed specifically in testis.

The protein localises to the nucleus. Functionally, may be involved in transcriptional regulation. The polypeptide is Zinc finger protein 165 (ZNF165) (Homo sapiens (Human)).